A 466-amino-acid chain; its full sequence is Asparagine--tRNA ligase (466 aa).

It belongs to the class-II aminoacyl-tRNA synthetase family. In terms of assembly, homodimer.

It localises to the cytoplasm. The enzyme catalyses tRNA(Asn) + L-asparagine + ATP = L-asparaginyl-tRNA(Asn) + AMP + diphosphate + H(+). This chain is Asparagine--tRNA ligase, found in Salmonella choleraesuis (strain SC-B67).